Consider the following 339-residue polypeptide: Lipoate-protein ligase A (339 aa).

Positions 28 to 211 (NPDSHTLFLW…AFREYYRDTD (184 aa)) constitute a BPL/LPL catalytic domain. ATP-binding positions include arginine 70, 75–78 (GAVF), and lysine 129. Lysine 129 is a (R)-lipoate binding site.

It belongs to the LplA family. Monomer.

The protein resides in the cytoplasm. The enzyme catalyses L-lysyl-[lipoyl-carrier protein] + (R)-lipoate + ATP = N(6)-[(R)-lipoyl]-L-lysyl-[lipoyl-carrier protein] + AMP + diphosphate + H(+). It functions in the pathway protein modification; protein lipoylation via exogenous pathway; protein N(6)-(lipoyl)lysine from lipoate: step 1/2. Its pathway is protein modification; protein lipoylation via exogenous pathway; protein N(6)-(lipoyl)lysine from lipoate: step 2/2. Its function is as follows. Catalyzes both the ATP-dependent activation of exogenously supplied lipoate to lipoyl-AMP and the transfer of the activated lipoyl onto the lipoyl domains of lipoate-dependent enzymes. This is Lipoate-protein ligase A from Psychrobacter cryohalolentis (strain ATCC BAA-1226 / DSM 17306 / VKM B-2378 / K5).